Consider the following 314-residue polypeptide: 4-hydroxy-3-methylbut-2-enyl diphosphate reductase (314 aa).

[4Fe-4S] cluster is bound at residue Cys-12. His-41 and His-74 together coordinate (2E)-4-hydroxy-3-methylbut-2-enyl diphosphate. Residues His-41 and His-74 each contribute to the dimethylallyl diphosphate site. Isopentenyl diphosphate is bound by residues His-41 and His-74. Position 96 (Cys-96) interacts with [4Fe-4S] cluster. A (2E)-4-hydroxy-3-methylbut-2-enyl diphosphate-binding site is contributed by His-124. Residue His-124 participates in dimethylallyl diphosphate binding. His-124 serves as a coordination point for isopentenyl diphosphate. Glu-126 serves as the catalytic Proton donor. Residue Thr-167 coordinates (2E)-4-hydroxy-3-methylbut-2-enyl diphosphate. A [4Fe-4S] cluster-binding site is contributed by Cys-197. 4 residues coordinate (2E)-4-hydroxy-3-methylbut-2-enyl diphosphate: Ser-225, Ser-226, Asn-227, and Ser-269. Dimethylallyl diphosphate is bound by residues Ser-225, Ser-226, Asn-227, and Ser-269. Ser-225, Ser-226, Asn-227, and Ser-269 together coordinate isopentenyl diphosphate.

It belongs to the IspH family. It depends on [4Fe-4S] cluster as a cofactor.

It catalyses the reaction isopentenyl diphosphate + 2 oxidized [2Fe-2S]-[ferredoxin] + H2O = (2E)-4-hydroxy-3-methylbut-2-enyl diphosphate + 2 reduced [2Fe-2S]-[ferredoxin] + 2 H(+). The catalysed reaction is dimethylallyl diphosphate + 2 oxidized [2Fe-2S]-[ferredoxin] + H2O = (2E)-4-hydroxy-3-methylbut-2-enyl diphosphate + 2 reduced [2Fe-2S]-[ferredoxin] + 2 H(+). The protein operates within isoprenoid biosynthesis; dimethylallyl diphosphate biosynthesis; dimethylallyl diphosphate from (2E)-4-hydroxy-3-methylbutenyl diphosphate: step 1/1. It participates in isoprenoid biosynthesis; isopentenyl diphosphate biosynthesis via DXP pathway; isopentenyl diphosphate from 1-deoxy-D-xylulose 5-phosphate: step 6/6. Functionally, catalyzes the conversion of 1-hydroxy-2-methyl-2-(E)-butenyl 4-diphosphate (HMBPP) into a mixture of isopentenyl diphosphate (IPP) and dimethylallyl diphosphate (DMAPP). Acts in the terminal step of the DOXP/MEP pathway for isoprenoid precursor biosynthesis. This is 4-hydroxy-3-methylbut-2-enyl diphosphate reductase from Actinobacillus pleuropneumoniae serotype 3 (strain JL03).